The following is a 362-amino-acid chain: Phosphoserine aminotransferase (362 aa).

Residue Arg42 participates in L-glutamate binding. Pyridoxal 5'-phosphate is bound by residues 76–77, Trp102, Thr152, Asp172, and Gln195; that span reads AR. Lys196 is subject to N6-(pyridoxal phosphate)lysine. 237-238 is a binding site for pyridoxal 5'-phosphate; sequence NT.

Belongs to the class-V pyridoxal-phosphate-dependent aminotransferase family. SerC subfamily. Homodimer. Pyridoxal 5'-phosphate serves as cofactor.

The protein localises to the cytoplasm. It carries out the reaction O-phospho-L-serine + 2-oxoglutarate = 3-phosphooxypyruvate + L-glutamate. The enzyme catalyses 4-(phosphooxy)-L-threonine + 2-oxoglutarate = (R)-3-hydroxy-2-oxo-4-phosphooxybutanoate + L-glutamate. Its pathway is amino-acid biosynthesis; L-serine biosynthesis; L-serine from 3-phospho-D-glycerate: step 2/3. It functions in the pathway cofactor biosynthesis; pyridoxine 5'-phosphate biosynthesis; pyridoxine 5'-phosphate from D-erythrose 4-phosphate: step 3/5. Functionally, catalyzes the reversible conversion of 3-phosphohydroxypyruvate to phosphoserine and of 3-hydroxy-2-oxo-4-phosphonooxybutanoate to phosphohydroxythreonine. This chain is Phosphoserine aminotransferase, found in Haemophilus influenzae (strain ATCC 51907 / DSM 11121 / KW20 / Rd).